Reading from the N-terminus, the 460-residue chain is Orexin receptor type 2 (460 aa).

At Met1–Glu54 the chain is on the extracellular side. N-linked (GlcNAc...) asparagine glycosylation is found at Asn14 and Asn22. A required for response to orexin-A region spans residues Asp33–His49. Residues Trp55–Val75 traverse the membrane as a helical segment. Over Cys76–Val88 the chain is Cytoplasmic. Residues Thr89–Ala110 form a helical membrane-spanning segment. The Extracellular segment spans residues Thr111 to Cys127. A disulfide bridge links Cys127 with Cys210. Residues Lys128–Leu150 traverse the membrane as a helical segment. At Asp151–Arg170 the chain is on the cytoplasmic side. A helical transmembrane segment spans residues Asn171 to Met191. Residues Glu192–Met222 lie on the Extracellular side of the membrane. The N-linked (GlcNAc...) asparagine glycan is linked to Asn202. Residues Tyr223–Tyr243 form a helical membrane-spanning segment. At Leu244–Arg304 the chain is on the cytoplasmic side. Residues Met305 to Leu326 traverse the membrane as a helical segment. Residues Lys327–Val342 lie on the Extracellular side of the membrane. A helical transmembrane segment spans residues Tyr343 to Phe366. The Cytoplasmic portion of the chain corresponds to Leu367–Val460.

This sequence belongs to the G-protein coupled receptor 1 family. In terms of tissue distribution, widely expressed. Isoform 2 not detected in skeletal muscle and kidney.

The protein resides in the cell membrane. Its function is as follows. Nonselective, high-affinity receptor for both orexin-A and orexin-B neuropeptides. Triggers an increase in cytoplasmic Ca(2+) levels in response to orexin-A binding. This is Orexin receptor type 2 (Hcrtr2) from Mus musculus (Mouse).